Here is a 182-residue protein sequence, read N- to C-terminus: Adenine phosphoribosyltransferase (182 aa).

The protein belongs to the purine/pyrimidine phosphoribosyltransferase family. As to quaternary structure, homodimer.

It localises to the cytoplasm. The enzyme catalyses AMP + diphosphate = 5-phospho-alpha-D-ribose 1-diphosphate + adenine. Its pathway is purine metabolism; AMP biosynthesis via salvage pathway; AMP from adenine: step 1/1. Its function is as follows. Catalyzes a salvage reaction resulting in the formation of AMP, that is energically less costly than de novo synthesis. The polypeptide is Adenine phosphoribosyltransferase (Pseudomonas fluorescens (strain Pf0-1)).